Consider the following 313-residue polypeptide: Pyrimidine-specific ribonucleoside hydrolase RihB (313 aa).

E11 serves as the catalytic Proton acceptor. Residues E11, D16, and V124 each contribute to the Ca(2+) site. Positions 227 and 239 each coordinate substrate. D240 provides a ligand contact to Ca(2+).

This sequence belongs to the IUNH family. RihB subfamily. As to quaternary structure, homotetramer. The cofactor is Ca(2+).

It catalyses the reaction a pyrimidine ribonucleoside + H2O = a pyrimidine nucleobase + D-ribose. Functionally, hydrolyzes cytidine or uridine to ribose and cytosine or uracil, respectively. Has a clear preference for cytidine over uridine. Strictly specific for ribonucleosides. This Shigella flexneri serotype 5b (strain 8401) protein is Pyrimidine-specific ribonucleoside hydrolase RihB.